The chain runs to 316 residues: Geminin coiled-coil domain-containing protein 1 (316 aa).

Residues 82 to 117 adopt a coiled-coil conformation; sequence QISANKQLQDTLLQKEEELSRLHEENNKLKEFLNSA. Polar residues-rich tracts occupy residues 134 to 155 and 207 to 234; these read GQSS…STPG and MSLQ…QAAT. Disordered stretches follow at residues 134–160 and 207–269; these read GQSS…KAKR and MSLQ…DVAP. Position 153 is a phosphothreonine; by cdk2 (T153). Residues 235–252 are compositionally biased toward low complexity; sequence SCSLSPSQCSSASLPESE. The segment covering 253 to 262 has biased composition (polar residues); sequence TASPLSSPTY.

The protein belongs to the GEMC1 family. In terms of assembly, interacts with topbp1. Interacts with Cdc45l and the kinase cdk2-cyclin-E (the interaction is direct). Post-translationally, highly phosphorylated by cdk2; stimulates initiation of DNA replication. Expressed in most tissues. Enriched in proliferating cells from skin and gut.

Its subcellular location is the nucleus. In terms of biological role, regulator of DNA replication. Promotes initiation of chromosomal DNA replication by mediating topbp1- and cdk2-dependent recruitment of cdc45l onto replication origins. This chain is Geminin coiled-coil domain-containing protein 1 (gmnc), found in Xenopus laevis (African clawed frog).